The primary structure comprises 378 residues: Chaperone protein DnaJ (378 aa).

In terms of domain architecture, J spans 5-70 (DYYEVLSVGR…DKKAAYDQFG (66 aa)). The CR-type zinc-finger motif lies at 133-211 (GLTKELRIPT…CHGEGRVEKS (79 aa)). Zn(2+)-binding residues include Cys146, Cys149, Cys163, Cys166, Cys185, Cys188, Cys199, and Cys202. CXXCXGXG motif repeat units lie at residues 146 to 153 (CDTCDGSG), 163 to 170 (CGTCHGQG), 185 to 192 (CPTCHGRG), and 199 to 206 (CNSCHGEG).

Belongs to the DnaJ family. As to quaternary structure, homodimer. It depends on Zn(2+) as a cofactor.

The protein localises to the cytoplasm. Participates actively in the response to hyperosmotic and heat shock by preventing the aggregation of stress-denatured proteins and by disaggregating proteins, also in an autonomous, DnaK-independent fashion. Unfolded proteins bind initially to DnaJ; upon interaction with the DnaJ-bound protein, DnaK hydrolyzes its bound ATP, resulting in the formation of a stable complex. GrpE releases ADP from DnaK; ATP binding to DnaK triggers the release of the substrate protein, thus completing the reaction cycle. Several rounds of ATP-dependent interactions between DnaJ, DnaK and GrpE are required for fully efficient folding. Also involved, together with DnaK and GrpE, in the DNA replication of plasmids through activation of initiation proteins. This is Chaperone protein DnaJ from Shewanella woodyi (strain ATCC 51908 / MS32).